We begin with the raw amino-acid sequence, 210 residues long: Silenced mating-type protein ALPHA2 (210 aa).

M1 is modified (N-acetylmethionine). Residues 1–102 (MNKIPIKDLL…RSIENDRSNY (102 aa)) form an N-terminal domain region. Residues 103–128 (QLTQKNKSADGLVFNVVTQDMINKST) are flexible linker. Positions 129 to 191 (KPYRGHRFTK…NRRRKEKTIT (63 aa)) form a DNA-binding region, homeobox; TALE-type. A C-terminal tail region spans residues 190–210 (ITIAPELADLLSGEPLAKKKE).

This sequence belongs to the TALE/M-ATYP homeobox family.

The protein resides in the nucleus. In terms of biological role, mating type proteins are sequence specific DNA-binding proteins that act as master switches in yeast differentiation by controlling gene expression in a cell type-specific fashion. Silenced copy of ALPHA2 at HML. In Saccharomyces cerevisiae (strain ATCC 204508 / S288c) (Baker's yeast), this protein is Silenced mating-type protein ALPHA2 (HMLALPHA2).